A 488-amino-acid chain; its full sequence is Intron-encoded DNA endonuclease I-AniI (488 aa).

Positions 1-169 (MRILKSHPLL…DIVEFIWGGL (169 aa)) are cobA exon 1 encoded. The interval 170–488 (YTDEPQCGDV…SEKIKIPSNY (319 aa)) is cobA intron encoded.

The protein in the C-terminal section; belongs to the LAGLIDADG endonuclease family. As to quaternary structure, homodimer. Requires Mg(2+) as cofactor. The mature protein may arise from proteolytic cleavage of an in-frame translation of cobA exon 1 plus intron, containing the I-AniI open reading frame. Cleavage may take place close to Met-213 resulting in an active endonuclease/maturase of about 30 kDa.

The protein resides in the mitochondrion. Mitochondrial DNA endonuclease and mRNA maturase involved in intron homing and required for splicing of the cytochrome b (cobA) gene intron, containing its own coding sequence. The protein stimulates the intrinsic ribozyme activity of the intron through binding to and stabilizing specific secondary and tertiary structure elements in the RNA. As an endonuclease it introduces a specific double-strand break at the junction of the two exons the cobA gene and thus mediates the insertion of an intron, containing its own coding sequence (group I intron), into an intronless gene. Recognizes with limited specificity and cleaves the sequence 5'-GAGGAGGTTTCTCTGTA-3'. The proteins RNA and DNA recognition and binding surfaces are independent. The chain is Intron-encoded DNA endonuclease I-AniI (I-AniI) from Emericella nidulans (Aspergillus nidulans).